The chain runs to 473 residues: Photosystem II CP43 reaction center protein (473 aa).

A propeptide spanning residues 1–14 (MKTLYSLRRFYPVE) is cleaved from the precursor. Residue threonine 15 is modified to N-acetylthreonine. At threonine 15 the chain carries Phosphothreonine. 5 helical membrane passes run 69–93 (LFEVAHFVPEKPMYEQGLILLPHLA), 134–155 (LLGPETLEESFPFFGYVWKDRN), 178–200 (KALYFGGVYDTWAPGGGDVRKIT), 255–275 (KPFAWARRAFVWSGEAYLSYS), and 291–312 (WFNNTAYPSEFYGPTGPEASQA). Glutamate 367 contacts [CaMn4O5] cluster. A helical membrane pass occupies residues 447–471 (RARAAAAGFEKGIDRDFEPVLSMTP).

Belongs to the PsbB/PsbC family. PsbC subfamily. As to quaternary structure, PSII is composed of 1 copy each of membrane proteins PsbA, PsbB, PsbC, PsbD, PsbE, PsbF, PsbH, PsbI, PsbJ, PsbK, PsbL, PsbM, PsbT, PsbX, PsbY, PsbZ, Psb30/Ycf12, at least 3 peripheral proteins of the oxygen-evolving complex and a large number of cofactors. It forms dimeric complexes. Binds multiple chlorophylls and provides some of the ligands for the Ca-4Mn-5O cluster of the oxygen-evolving complex. It may also provide a ligand for a Cl- that is required for oxygen evolution. PSII binds additional chlorophylls, carotenoids and specific lipids. is required as a cofactor.

Its subcellular location is the plastid. The protein resides in the chloroplast thylakoid membrane. Its function is as follows. One of the components of the core complex of photosystem II (PSII). It binds chlorophyll and helps catalyze the primary light-induced photochemical processes of PSII. PSII is a light-driven water:plastoquinone oxidoreductase, using light energy to abstract electrons from H(2)O, generating O(2) and a proton gradient subsequently used for ATP formation. The protein is Photosystem II CP43 reaction center protein of Drimys granadensis.